A 298-amino-acid chain; its full sequence is Ribose-phosphate pyrophosphokinase (298 aa).

ATP contacts are provided by residues 33-35 (DGE) and 91-92 (RQ). Positions 125 and 164 each coordinate Mg(2+). Lys187 is an active-site residue. D-ribose 5-phosphate-binding residues include Arg189 and Asp224.

Belongs to the ribose-phosphate pyrophosphokinase family. Class III (archaeal) subfamily. It depends on Mg(2+) as a cofactor.

The protein localises to the cytoplasm. It catalyses the reaction D-ribose 5-phosphate + ATP = 5-phospho-alpha-D-ribose 1-diphosphate + AMP + H(+). It functions in the pathway metabolic intermediate biosynthesis; 5-phospho-alpha-D-ribose 1-diphosphate biosynthesis; 5-phospho-alpha-D-ribose 1-diphosphate from D-ribose 5-phosphate (route I): step 1/1. Functionally, involved in the biosynthesis of the central metabolite phospho-alpha-D-ribosyl-1-pyrophosphate (PRPP) via the transfer of pyrophosphoryl group from ATP to 1-hydroxyl of ribose-5-phosphate (Rib-5-P). In Methanobrevibacter smithii (strain ATCC 35061 / DSM 861 / OCM 144 / PS), this protein is Ribose-phosphate pyrophosphokinase.